Here is a 49-residue protein sequence, read N- to C-terminus: Large ribosomal subunit protein bL33 (49 aa).

It belongs to the bacterial ribosomal protein bL33 family.

This Syntrophobacter fumaroxidans (strain DSM 10017 / MPOB) protein is Large ribosomal subunit protein bL33.